We begin with the raw amino-acid sequence, 71 residues long: Translation initiation factor IF-1 (71 aa).

The S1-like domain occupies 1–71; sequence MSKDDLIQFT…LTKGRVIHRH (71 aa).

The protein belongs to the IF-1 family. As to quaternary structure, component of the 30S ribosomal translation pre-initiation complex which assembles on the 30S ribosome in the order IF-2 and IF-3, IF-1 and N-formylmethionyl-tRNA(fMet); mRNA recruitment can occur at any time during PIC assembly.

Its subcellular location is the cytoplasm. Functionally, one of the essential components for the initiation of protein synthesis. Stabilizes the binding of IF-2 and IF-3 on the 30S subunit to which N-formylmethionyl-tRNA(fMet) subsequently binds. Helps modulate mRNA selection, yielding the 30S pre-initiation complex (PIC). Upon addition of the 50S ribosomal subunit IF-1, IF-2 and IF-3 are released leaving the mature 70S translation initiation complex. In Rickettsia prowazekii (strain Madrid E), this protein is Translation initiation factor IF-1.